Consider the following 440-residue polypeptide: NK1 transcription factor-related protein 1 (440 aa).

Residues 1–13 are compositionally biased toward low complexity; it reads MSTSGPAAPGDVP. Disordered stretches follow at residues 1-82, 145-291, and 342-387; these read MSTS…RPTS, GVAA…PRRA, and KWKK…PMGA. Residues 14–31 are compositionally biased toward pro residues; sequence ALPPPPPGPGSGPAPPAP. Low complexity-rich tracts occupy residues 62–74 and 145–158; these read VPAVPEGAGAARP and GVAAAAGAEPTSAG. Residues 170–181 are compositionally biased toward polar residues; it reads GYSSGSGRSPTA. The segment covering 182–198 has biased composition (acidic residues); it reads DSEDEAPEDEDEEEAPE. Positions 210-222 are enriched in gly residues; that stretch reads GGSGGLGARGSGC. Low complexity predominate over residues 237–269; sequence AAPGPRGNSPGAPGPPATATGAGSAGSTPQGAA. Positions 288-347 form a DNA-binding region, homeobox; the sequence is PRRARTAFTYEQLVALENKFKATRYLSVCERLNLALSLSLTETQVKIWFQNRRTKWKKQN. The segment covering 356 to 374 has biased composition (gly residues); it reads TGGGGGPGPGAGPGAGLPG.

It belongs to the NK-1 homeobox family.

The protein resides in the nucleus. Its function is as follows. May be required for the coordinated crosstalk of factors involved in the maintenance of energy homeostasis, possibly by regulating the transcription of specific factors involved in energy balance. The protein is NK1 transcription factor-related protein 1 of Mus musculus (Mouse).